We begin with the raw amino-acid sequence, 452 residues long: Phosphoglucosamine mutase (452 aa).

Residue Ser-104 is the Phosphoserine intermediate of the active site. Residues Ser-104, Asp-246, Asp-248, and Asp-250 each coordinate Mg(2+). Position 104 is a phosphoserine (Ser-104).

This sequence belongs to the phosphohexose mutase family. Mg(2+) is required as a cofactor. In terms of processing, activated by phosphorylation.

It carries out the reaction alpha-D-glucosamine 1-phosphate = D-glucosamine 6-phosphate. In terms of biological role, catalyzes the conversion of glucosamine-6-phosphate to glucosamine-1-phosphate. This Streptomyces avermitilis (strain ATCC 31267 / DSM 46492 / JCM 5070 / NBRC 14893 / NCIMB 12804 / NRRL 8165 / MA-4680) protein is Phosphoglucosamine mutase.